A 129-amino-acid chain; its full sequence is Beta-galactoside-binding lectin (129 aa).

Position 1 is an N-acetylserine (Ser-1). The 126-residue stretch at 4-129 folds into the Galectin domain; it reads GVVDERMSFK…EARIYSIEIK (126 aa). 69 to 75 lines the a beta-D-galactoside pocket; the sequence is WGTEQRE.

Functionally, this protein binds beta-galactoside. Its physiological function is not yet known. The chain is Beta-galactoside-binding lectin from Electrophorus electricus (Electric eel).